The chain runs to 868 residues: MADVTVKQLAQVVGIPVERLLNQLQEAGLSFTDDQQTVNEEQKRILLNHLKGSSNRDISAAPERITLRRKSMSQVTVGHDMHSGKTVNIEVRKKKTFIKRSAIPEQAEVEEPVVPPVVEEPVHEEITVVSEVSAETPELKETEEHPVIEPVAELDETVKEEEKINSEENTAESQDELTHANTDVIENLVDVVEETIPVSKKEEVKPEKVSKKKHLEQTDSDISEFKKGKKKPKYHTFEHDEEEQELHRRGGRSKFKKKKGTEKSDKYREAEETLTHGFALPTAPIVREVLIPETITVAELAKRMSVKAAEVIKVMMSLGAMATINQVIDQETSVIVVEEMGHKPIIIKEDAVETGLGEAISKGTKTEGRAPVVTIMGHVDHGKTSLLDYIRRTKVAAGEAGGITQHIGAYHVSTPKGNITFLDTPGHAAFTAMRARGAQATDIVILIVAADDGVKPQTIEAIQHAKAAKVPIIVAINKMDKPDADPERVMNELSVQEVIPEAWGGDTMFVNISAKSGMGIDDLLDAILLQSEVLELKAVTDGAAKGVVIESRLDKGRGPVATVLVQSGTLHKGDILLAGFQYGRVRALVSDNGDLVDSAGPSIPVEVLGLSAIPHAGDEAVVVPDEKKAREVALFRQGRFRDVKLARRQKTTIEGIMENMTATESKVLNIVLKADVQGSLEAISDALTKLSTDEVKVDVISSGVGGITESDVHLAIASNAILIGFNVRADGTAKRLAEQESVSIHYYSVIYDIVDQIKGALTGMLAPQFKEEIVGIAEVRDVFKSPKIGAIAGCMVIEGVVKRNNPIRVLRSNVVIYEGTLESLRRFKDDVLEVRQGFECGIGVKNYNDVKPGDLIEVFETVEIKRDL.

Basic and acidic residues-rich tracts occupy residues 156–166 (ETVKEEEKINS) and 199–209 (SKKEEVKPEKV). Disordered regions lie at residues 156-177 (ETVK…QDEL) and 199-269 (SKKE…KYRE). The span at 249–260 (RGGRSKFKKKKG) shows a compositional bias: basic residues. The region spanning 368–537 (GRAPVVTIMG…LLQSEVLELK (170 aa)) is the tr-type G domain. Residues 377 to 384 (GHVDHGKT) are G1. 377-384 (GHVDHGKT) provides a ligand contact to GTP. The segment at 402–406 (GITQH) is G2. Residues 423–426 (DTPG) are G3. Residues 423–427 (DTPGH) and 477–480 (NKMD) contribute to the GTP site. The tract at residues 477-480 (NKMD) is G4. A G5 region spans residues 513–515 (SAK).

This sequence belongs to the TRAFAC class translation factor GTPase superfamily. Classic translation factor GTPase family. IF-2 subfamily.

The protein resides in the cytoplasm. In terms of biological role, one of the essential components for the initiation of protein synthesis. Protects formylmethionyl-tRNA from spontaneous hydrolysis and promotes its binding to the 30S ribosomal subunits. Also involved in the hydrolysis of GTP during the formation of the 70S ribosomal complex. This chain is Translation initiation factor IF-2, found in Legionella pneumophila subsp. pneumophila (strain Philadelphia 1 / ATCC 33152 / DSM 7513).